The sequence spans 357 residues: Alanine racemase (357 aa).

Residue Lys-35 is the Proton acceptor; specific for D-alanine of the active site. Lys-35 carries the N6-(pyridoxal phosphate)lysine modification. Arg-131 provides a ligand contact to substrate. Residue Tyr-256 is the Proton acceptor; specific for L-alanine of the active site. Met-304 lines the substrate pocket.

It belongs to the alanine racemase family. Requires pyridoxal 5'-phosphate as cofactor.

It catalyses the reaction L-alanine = D-alanine. Its pathway is amino-acid biosynthesis; D-alanine biosynthesis; D-alanine from L-alanine: step 1/1. Its function is as follows. Catalyzes the interconversion of L-alanine and D-alanine. May also act on other amino acids. The chain is Alanine racemase (alr) from Legionella pneumophila (strain Lens).